Consider the following 121-residue polypeptide: Large ribosomal subunit protein bL19 (121 aa).

The protein belongs to the bacterial ribosomal protein bL19 family.

Functionally, this protein is located at the 30S-50S ribosomal subunit interface and may play a role in the structure and function of the aminoacyl-tRNA binding site. The protein is Large ribosomal subunit protein bL19 of Symbiobacterium thermophilum (strain DSM 24528 / JCM 14929 / IAM 14863 / T).